A 99-amino-acid chain; its full sequence is Small ribosomal subunit protein eS24 (99 aa).

It belongs to the eukaryotic ribosomal protein eS24 family.

This Thermoplasma volcanium (strain ATCC 51530 / DSM 4299 / JCM 9571 / NBRC 15438 / GSS1) protein is Small ribosomal subunit protein eS24 (rps2e).